Consider the following 295-residue polypeptide: Pyridoxal 5'-phosphate synthase subunit PdxS (295 aa).

Aspartate 23 provides a ligand contact to D-ribose 5-phosphate. Lysine 80 acts as the Schiff-base intermediate with D-ribose 5-phosphate in catalysis. Glycine 152 provides a ligand contact to D-ribose 5-phosphate. Arginine 164 provides a ligand contact to D-glyceraldehyde 3-phosphate. Residues glycine 213 and 234–235 each bind D-ribose 5-phosphate; that span reads GS.

Belongs to the PdxS/SNZ family. As to quaternary structure, in the presence of PdxT, forms a dodecamer of heterodimers.

It catalyses the reaction aldehydo-D-ribose 5-phosphate + D-glyceraldehyde 3-phosphate + L-glutamine = pyridoxal 5'-phosphate + L-glutamate + phosphate + 3 H2O + H(+). Its pathway is cofactor biosynthesis; pyridoxal 5'-phosphate biosynthesis. Functionally, catalyzes the formation of pyridoxal 5'-phosphate from ribose 5-phosphate (RBP), glyceraldehyde 3-phosphate (G3P) and ammonia. The ammonia is provided by the PdxT subunit. Can also use ribulose 5-phosphate and dihydroxyacetone phosphate as substrates, resulting from enzyme-catalyzed isomerization of RBP and G3P, respectively. This chain is Pyridoxal 5'-phosphate synthase subunit PdxS, found in Methanosphaera stadtmanae (strain ATCC 43021 / DSM 3091 / JCM 11832 / MCB-3).